We begin with the raw amino-acid sequence, 394 residues long: Cell adhesion molecule 3 (394 aa).

The N-terminal stretch at 1–17 is a signal peptide; the sequence is MHHPVILLLCLSSLAGA. Residues 18–326 lie on the Extracellular side of the membrane; it reads ANLPPEDLSQ…PIPSTSSIDH (309 aa). One can recognise an Ig-like V-type domain in the interval 22-120; sequence PEDLSQPVTA…PVRTAKAVVT (99 aa). 2 cysteine pairs are disulfide-bonded: Cys45–Cys105 and Cys147–Cys204. 2 consecutive Ig-like C2-type domains span residues 128-223 and 228-306; these read PQVS…HKIQ and PTAK…TFIT. The tract at residues 217 to 240 is disordered; it reads SSSHKIQVQYKPTAKIESRPSMPR. Over residues 230–240 the composition is skewed to basic and acidic residues; it reads AKIESRPSMPR. A disulfide bond links Cys249 and Cys295. Residues 327 to 347 traverse the membrane as a helical segment; that stretch reads AVIGGVVAVIAFLLFCLLIVL. The Cytoplasmic portion of the chain corresponds to 348–394; the sequence is GRYLIRHKGTYLTHEAKGSDDAPDADTAIINAEGGQGGSDDKKEYFI. A disordered region spans residues 363–394; it reads AKGSDDAPDADTAIINAEGGQGGSDDKKEYFI.

Belongs to the nectin family.

Its subcellular location is the cell membrane. The protein resides in the cell junction. Functionally, may be involved in cell-cell adhesion. This chain is Cell adhesion molecule 3 (cadm3), found in Xenopus laevis (African clawed frog).